A 252-amino-acid polypeptide reads, in one-letter code: Imidazole glycerol phosphate synthase subunit HisF (252 aa).

Active-site residues include D11 and D130.

The protein belongs to the HisA/HisF family. In terms of assembly, heterodimer of HisH and HisF.

It localises to the cytoplasm. It catalyses the reaction 5-[(5-phospho-1-deoxy-D-ribulos-1-ylimino)methylamino]-1-(5-phospho-beta-D-ribosyl)imidazole-4-carboxamide + L-glutamine = D-erythro-1-(imidazol-4-yl)glycerol 3-phosphate + 5-amino-1-(5-phospho-beta-D-ribosyl)imidazole-4-carboxamide + L-glutamate + H(+). The protein operates within amino-acid biosynthesis; L-histidine biosynthesis; L-histidine from 5-phospho-alpha-D-ribose 1-diphosphate: step 5/9. IGPS catalyzes the conversion of PRFAR and glutamine to IGP, AICAR and glutamate. The HisF subunit catalyzes the cyclization activity that produces IGP and AICAR from PRFAR using the ammonia provided by the HisH subunit. In Hyphomonas neptunium (strain ATCC 15444), this protein is Imidazole glycerol phosphate synthase subunit HisF.